A 132-amino-acid polypeptide reads, in one-letter code: Tyrosine phosphatase-like protein N2 (132 aa).

Residues 1–132 (MQGPMKNTVA…DILGRFQRVF (132 aa)) form the Tyrosine-protein phosphatase domain.

Belongs to the protein-tyrosine phosphatase family.

This chain is Tyrosine phosphatase-like protein N2 (N4), found in Microplitis demolitor (Parasitoid wasp).